A 342-amino-acid chain; its full sequence is Cytosolic Fe-S cluster assembly factor NBP35 (342 aa).

[4Fe-4S] cluster-binding residues include cysteine 33, cysteine 47, cysteine 50, and cysteine 56. Position 86-93 (86-93 (GKGGVGKS)) interacts with ATP. 2 residues coordinate [4Fe-4S] cluster: cysteine 259 and cysteine 262.

Belongs to the Mrp/NBP35 ATP-binding proteins family. NUBP1/NBP35 subfamily. In terms of assembly, heterotetramer of 2 NBP35 and 2 CFD1 chains. [4Fe-4S] cluster is required as a cofactor.

It localises to the cytoplasm. Its function is as follows. Component of the cytosolic iron-sulfur (Fe/S) protein assembly (CIA) machinery. Required for maturation of extramitochondrial Fe-S proteins. The NBP35-CFD1 heterotetramer forms a Fe-S scaffold complex, mediating the de novo assembly of an Fe-S cluster and its transfer to target apoproteins. This chain is Cytosolic Fe-S cluster assembly factor NBP35, found in Gibberella zeae (strain ATCC MYA-4620 / CBS 123657 / FGSC 9075 / NRRL 31084 / PH-1) (Wheat head blight fungus).